A 130-amino-acid chain; its full sequence is Large ribosomal subunit protein bL12 (130 aa).

This sequence belongs to the bacterial ribosomal protein bL12 family. In terms of assembly, homodimer. Part of the ribosomal stalk of the 50S ribosomal subunit. Forms a multimeric L10(L12)X complex, where L10 forms an elongated spine to which 2 to 4 L12 dimers bind in a sequential fashion. Binds GTP-bound translation factors.

Its function is as follows. Forms part of the ribosomal stalk which helps the ribosome interact with GTP-bound translation factors. Is thus essential for accurate translation. The chain is Large ribosomal subunit protein bL12 from Prochlorococcus marinus (strain SARG / CCMP1375 / SS120).